The sequence spans 187 residues: Cerebral dopamine neurotrophic factor (187 aa).

The first 24 residues, 1-24, serve as a signal peptide directing secretion; it reads MRCTSPAALVTFCAGLWISNHVLA. 3 cysteine pairs are disulfide-bonded: Cys-37-Cys-124, Cys-40-Cys-113, and Cys-71-Cys-82.

This sequence belongs to the ARMET family.

Its subcellular location is the secreted. Trophic factor for dopamine neurons. Prevents the 6-hydroxydopamine (6-OHDA)-induced degeneration of dopaminergic neurons. When administered after 6-OHDA-lesioning, restores the dopaminergic function and prevents the degeneration of dopaminergic neurons in substantia nigra. The polypeptide is Cerebral dopamine neurotrophic factor (Cdnf) (Rattus norvegicus (Rat)).